A 216-amino-acid chain; its full sequence is Pyrrolidone-carboxylate peptidase (216 aa).

Active-site residues include Glu-80, Cys-143, and His-168.

This sequence belongs to the peptidase C15 family. As to quaternary structure, homotetramer.

It localises to the cytoplasm. It carries out the reaction Release of an N-terminal pyroglutamyl group from a polypeptide, the second amino acid generally not being Pro.. Functionally, removes 5-oxoproline from various penultimate amino acid residues except L-proline. The protein is Pyrrolidone-carboxylate peptidase of Cupriavidus pinatubonensis (strain JMP 134 / LMG 1197) (Cupriavidus necator (strain JMP 134)).